The chain runs to 350 residues: Adenine deaminase (350 aa).

Zn(2+)-binding residues include His-24, His-26, and His-207. Catalysis depends on Glu-210, which acts as the Proton donor. Asp-288 provides a ligand contact to Zn(2+). Asp-289 serves as a coordination point for substrate.

Belongs to the metallo-dependent hydrolases superfamily. Adenosine and AMP deaminases family. Adenine deaminase type 2 subfamily. The cofactor is Zn(2+).

It catalyses the reaction adenine + H2O + H(+) = hypoxanthine + NH4(+). In terms of biological role, catalyzes the hydrolytic deamination of adenine to hypoxanthine. Plays an important role in the purine salvage pathway and in nitrogen catabolism. This chain is Adenine deaminase, found in Paraburkholderia xenovorans (strain LB400).